The primary structure comprises 388 residues: UDP-N-acetylglucosamine--N-acetylmuramyl-(pentapeptide) pyrophosphoryl-undecaprenol N-acetylglucosamine transferase (388 aa).

Residues 15-17 (TGG), Asn-125, Arg-168, Ser-196, and Gln-297 contribute to the UDP-N-acetyl-alpha-D-glucosamine site.

It belongs to the glycosyltransferase 28 family. MurG subfamily.

Its subcellular location is the cell inner membrane. The enzyme catalyses di-trans,octa-cis-undecaprenyl diphospho-N-acetyl-alpha-D-muramoyl-L-alanyl-D-glutamyl-meso-2,6-diaminopimeloyl-D-alanyl-D-alanine + UDP-N-acetyl-alpha-D-glucosamine = di-trans,octa-cis-undecaprenyl diphospho-[N-acetyl-alpha-D-glucosaminyl-(1-&gt;4)]-N-acetyl-alpha-D-muramoyl-L-alanyl-D-glutamyl-meso-2,6-diaminopimeloyl-D-alanyl-D-alanine + UDP + H(+). It functions in the pathway cell wall biogenesis; peptidoglycan biosynthesis. Cell wall formation. Catalyzes the transfer of a GlcNAc subunit on undecaprenyl-pyrophosphoryl-MurNAc-pentapeptide (lipid intermediate I) to form undecaprenyl-pyrophosphoryl-MurNAc-(pentapeptide)GlcNAc (lipid intermediate II). The sequence is that of UDP-N-acetylglucosamine--N-acetylmuramyl-(pentapeptide) pyrophosphoryl-undecaprenol N-acetylglucosamine transferase from Novosphingobium aromaticivorans (strain ATCC 700278 / DSM 12444 / CCUG 56034 / CIP 105152 / NBRC 16084 / F199).